The following is a 565-amino-acid chain: Methionine--tRNA ligase (565 aa).

Positions 16 to 26 (PYAYGVPHLGN) match the 'HIGH' region motif. The Zn(2+) site is built by cysteine 148, cysteine 151, cysteine 161, and cysteine 164. The 'KMSKS' region motif lies at 338–342 (KFSKS). Residue lysine 341 coordinates ATP.

The protein belongs to the class-I aminoacyl-tRNA synthetase family. MetG type 1 subfamily. Requires Zn(2+) as cofactor.

The protein resides in the cytoplasm. The catalysed reaction is tRNA(Met) + L-methionine + ATP = L-methionyl-tRNA(Met) + AMP + diphosphate. In terms of biological role, is required not only for elongation of protein synthesis but also for the initiation of all mRNA translation through initiator tRNA(fMet) aminoacylation. This Thermofilum pendens (strain DSM 2475 / Hrk 5) protein is Methionine--tRNA ligase.